Consider the following 413-residue polypeptide: Mitochondrial carrier protein MTM1 (413 aa).

Solcar repeat units lie at residues 59-193 (IGFT…FRNR), 205-305 (MTFC…IKKR), and 318-406 (GVFG…VKYV). 6 helical membrane passes run 65–85 (VFSA…LDVV), 170–190 (NAGL…YDMF), 204–226 (AMTF…TVCY), 284–304 (QLAR…PIKK), 316–336 (LVGV…IAAA), and 378–399 (LFMG…VVSF).

Belongs to the mitochondrial carrier (TC 2.A.29) family. In terms of tissue distribution, ubiquitous.

The protein resides in the mitochondrion inner membrane. Involved in the mitochondrial activation of MSD1 by specifically facilitating insertion of the essential manganese cofactor. Has the ability to activate iron regulon in an iron-dependent manner. In Arabidopsis thaliana (Mouse-ear cress), this protein is Mitochondrial carrier protein MTM1 (MTM1).